The primary structure comprises 383 residues: Lipid-A-disaccharide synthase (383 aa).

The protein belongs to the LpxB family.

The enzyme catalyses a lipid X + a UDP-2-N,3-O-bis[(3R)-3-hydroxyacyl]-alpha-D-glucosamine = a lipid A disaccharide + UDP + H(+). It participates in bacterial outer membrane biogenesis; LPS lipid A biosynthesis. Functionally, condensation of UDP-2,3-diacylglucosamine and 2,3-diacylglucosamine-1-phosphate to form lipid A disaccharide, a precursor of lipid A, a phosphorylated glycolipid that anchors the lipopolysaccharide to the outer membrane of the cell. This chain is Lipid-A-disaccharide synthase, found in Anaeromyxobacter dehalogenans (strain 2CP-1 / ATCC BAA-258).